Here is a 393-residue protein sequence, read N- to C-terminus: S-adenosylmethionine synthase 2 (393 aa).

Glu-9 serves as a coordination point for Mg(2+). His-15 is an ATP binding site. Glu-43 is a K(+) binding site. The L-methionine site is built by Glu-56 and Gln-99. ATP contacts are provided by residues 167–169 (DGK), 235–238 (SGRF), Asp-246, 252–253 (RK), Ala-269, Lys-273, and Lys-277. Asp-246 is an L-methionine binding site. L-methionine is bound at residue Lys-277.

The protein belongs to the AdoMet synthase family. As to quaternary structure, homotetramer. Interacts with GRF3. Mn(2+) is required as a cofactor. It depends on Mg(2+) as a cofactor. The cofactor is Co(2+). Requires K(+) as cofactor. In terms of tissue distribution, highly expressed in stems and roots. Detected in trichomes (at the protein level).

It is found in the cytoplasm. It carries out the reaction L-methionine + ATP + H2O = S-adenosyl-L-methionine + phosphate + diphosphate. It participates in amino-acid biosynthesis; S-adenosyl-L-methionine biosynthesis; S-adenosyl-L-methionine from L-methionine: step 1/1. With respect to regulation, inhibited by 5,5'-dithiobis-2-nitrobenzoic acid (DTNB) and N-ethylmaleimide (NEM) (in vitro). Functionally, catalyzes the formation of S-adenosylmethionine from methionine and ATP. The reaction comprises two steps that are both catalyzed by the same enzyme: formation of S-adenosylmethionine (AdoMet) and triphosphate, and subsequent hydrolysis of the triphosphate. This is S-adenosylmethionine synthase 2 (SAM2) from Arabidopsis thaliana (Mouse-ear cress).